Consider the following 278-residue polypeptide: Tryptophan synthase alpha chain (278 aa).

Active-site proton acceptor residues include E50 and D61.

It belongs to the TrpA family. In terms of assembly, tetramer of two alpha and two beta chains.

The enzyme catalyses (1S,2R)-1-C-(indol-3-yl)glycerol 3-phosphate + L-serine = D-glyceraldehyde 3-phosphate + L-tryptophan + H2O. It participates in amino-acid biosynthesis; L-tryptophan biosynthesis; L-tryptophan from chorismate: step 5/5. The alpha subunit is responsible for the aldol cleavage of indoleglycerol phosphate to indole and glyceraldehyde 3-phosphate. The protein is Tryptophan synthase alpha chain of Rhodopseudomonas palustris (strain TIE-1).